The primary structure comprises 219 residues: RING-H2 finger protein ATL78 (219 aa).

A helical transmembrane segment spans residues 57-77 (VMVLSVLLCALVCSLGLNSII). The RING-type; atypical zinc-finger motif lies at 131–173 (CAICLSEFVAEERVKLLPTCHHGFHVRCIDKWLSSHSSCPTCR).

Belongs to the RING-type zinc finger family. ATL subfamily.

It is found in the membrane. It catalyses the reaction S-ubiquitinyl-[E2 ubiquitin-conjugating enzyme]-L-cysteine + [acceptor protein]-L-lysine = [E2 ubiquitin-conjugating enzyme]-L-cysteine + N(6)-ubiquitinyl-[acceptor protein]-L-lysine.. Its pathway is protein modification; protein ubiquitination. This Arabidopsis thaliana (Mouse-ear cress) protein is RING-H2 finger protein ATL78 (ATL78).